A 228-amino-acid polypeptide reads, in one-letter code: Adapter protein MecA (228 aa).

The disordered stretch occupies residues 79-98 (GQKNDDSAADQTDDEGTDTQ). A compositionally biased stretch (acidic residues) spans 85–95 (SAADQTDDEGT).

It belongs to the MecA family. As to quaternary structure, homodimer.

In terms of biological role, enables the recognition and targeting of unfolded and aggregated proteins to the ClpC protease or to other proteins involved in proteolysis. This chain is Adapter protein MecA, found in Lacticaseibacillus casei (strain BL23) (Lactobacillus casei).